The primary structure comprises 564 residues: MAAAVVVRRAAGLIPLLSSRFGARMPLHRALSQIPPPRFCRLLSQQTKPFSASASNGAATDRTRELRLYNTKSRKKEQFRPRIPGREVGMYVCGVTPYDDSHIGHARAYVAFDVLYRYLRYLDYEVRYVRNFTDIDDKIIARANQLGEDPFSLSKRFSDDFLSDMANLQCLPPSVEPRVSDHVDEIINMIKQILDNRCAYVVGGDVYFSVDNFPEYGELSGRKLDDNRAGERVAVDERKRNPADFALWKAAKDGEPWWDSPWGPGRPGWHIECSAMSAHYLGHSFDIHGGGEDLIFPHHENEIAQSRAACCDSTINYWIHNGFVNVNSQKMSKSLGNFVTIRKVIEMYHPLALRMFLLGTHYRSPINYTIEQLNVASDRLYYTYQTLRDCEEICQHQQSNTGNPLPANTLNYIQKLHDEFETSMSDDLHTSVALAAMSEPLKVMNDLLHTRKGKKQDKRLESLSALEEKIRVVLSVLGLLPSSYHEALQQLRDKALRRASITEELVVQKIEERTAARKAKQYEKSDEIRKELAAVGIALMDGPDGTTWRPSLPLPEEEAVLAKT.

Residues 1 to 43 (MAAAVVVRRAAGLIPLLSSRFGARMPLHRALSQIPPPRFCRLL) constitute a chloroplast and mitochondrion transit peptide. Cys-93 is a Zn(2+) binding site. Positions 95 to 105 (VTPYDDSHIGH) match the 'HIGH' region motif. Positions 273, 298, and 302 each coordinate Zn(2+). Positions 330–334 (KMSKS) match the 'KMSKS' region motif. Position 333 (Lys-333) interacts with ATP.

It belongs to the class-I aminoacyl-tRNA synthetase family. Requires Zn(2+) as cofactor.

The protein resides in the plastid. It localises to the chloroplast. It is found in the mitochondrion. The catalysed reaction is tRNA(Cys) + L-cysteine + ATP = L-cysteinyl-tRNA(Cys) + AMP + diphosphate. In terms of biological role, nuclear genome-encoded factor required for normal assembly of chloroplast polysomes. The chain is Cysteine--tRNA ligase CPS1, chloroplastic/mitochondrial from Zea mays (Maize).